The following is a 696-amino-acid chain: Elongation factor G (696 aa).

The 281-residue stretch at 8-288 (EDYRNFGIMA…AVVEYLPSPA (281 aa)) folds into the tr-type G domain. GTP contacts are provided by residues 17–24 (AHIDAGKT), 86–90 (DTPGH), and 140–143 (NKMD).

Belongs to the TRAFAC class translation factor GTPase superfamily. Classic translation factor GTPase family. EF-G/EF-2 subfamily.

The protein localises to the cytoplasm. Its function is as follows. Catalyzes the GTP-dependent ribosomal translocation step during translation elongation. During this step, the ribosome changes from the pre-translocational (PRE) to the post-translocational (POST) state as the newly formed A-site-bound peptidyl-tRNA and P-site-bound deacylated tRNA move to the P and E sites, respectively. Catalyzes the coordinated movement of the two tRNA molecules, the mRNA and conformational changes in the ribosome. The sequence is that of Elongation factor G from Mesorhizobium japonicum (strain LMG 29417 / CECT 9101 / MAFF 303099) (Mesorhizobium loti (strain MAFF 303099)).